The primary structure comprises 245 residues: Triosephosphate isomerase (245 aa).

9–11 serves as a coordination point for substrate; the sequence is NWK. Catalysis depends on histidine 92, which acts as the Electrophile. The Proton acceptor role is filled by glutamate 164. Substrate is bound by residues glycine 170, serine 209, and 230–231; that span reads GG.

Belongs to the triosephosphate isomerase family. Homodimer.

It is found in the cytoplasm. The enzyme catalyses D-glyceraldehyde 3-phosphate = dihydroxyacetone phosphate. It participates in carbohydrate biosynthesis; gluconeogenesis. The protein operates within carbohydrate degradation; glycolysis; D-glyceraldehyde 3-phosphate from glycerone phosphate: step 1/1. Functionally, involved in the gluconeogenesis. Catalyzes stereospecifically the conversion of dihydroxyacetone phosphate (DHAP) to D-glyceraldehyde-3-phosphate (G3P). The chain is Triosephosphate isomerase from Cupriavidus necator (strain ATCC 17699 / DSM 428 / KCTC 22496 / NCIMB 10442 / H16 / Stanier 337) (Ralstonia eutropha).